The following is a 94-amino-acid chain: Integration host factor subunit beta (94 aa).

This sequence belongs to the bacterial histone-like protein family. As to quaternary structure, heterodimer of an alpha and a beta chain.

In terms of biological role, this protein is one of the two subunits of integration host factor, a specific DNA-binding protein that functions in genetic recombination as well as in transcriptional and translational control. The sequence is that of Integration host factor subunit beta from Histophilus somni (strain 129Pt) (Haemophilus somnus).